An 819-amino-acid polypeptide reads, in one-letter code: Putative U-box domain-containing protein 53 (819 aa).

2 disordered regions span residues 208–309 (TSDT…NPQF) and 398–433 (KETE…KEKL). Low complexity predominate over residues 223 to 237 (ERTSSSCSSGSGANS). Over residues 238–260 (DVMSNALKSNPHTLSNKRMQNLP) the composition is skewed to polar residues. The segment covering 278-296 (DETKKRSSDAAEEASKRSS) has biased composition (basic and acidic residues). The segment covering 297–307 (PETSRSVSWNP) has biased composition (polar residues). Positions 395–437 (IAKKETEKFEQKRREEREAAQRREAEMKATHEAKEKEKLEESS) form a coiled coil. One can recognise a Protein kinase domain in the interval 460 to 728 (FSEDLKIGMG…DLEDQILPVL (269 aa)). ATP contacts are provided by residues 466–474 (IGMGAYGDV) and Lys-487. Catalysis depends on Asp-582, which acts as the Proton acceptor. One can recognise a U-box domain in the interval 748–819 (QPPSHFFCPL…AIVEWRNRNQ (72 aa)).

The protein belongs to the protein kinase superfamily. Ser/Thr protein kinase family.

It catalyses the reaction L-seryl-[protein] + ATP = O-phospho-L-seryl-[protein] + ADP + H(+). The enzyme catalyses L-threonyl-[protein] + ATP = O-phospho-L-threonyl-[protein] + ADP + H(+). It carries out the reaction S-ubiquitinyl-[E2 ubiquitin-conjugating enzyme]-L-cysteine + [acceptor protein]-L-lysine = [E2 ubiquitin-conjugating enzyme]-L-cysteine + N(6)-ubiquitinyl-[acceptor protein]-L-lysine.. Its pathway is protein modification; protein ubiquitination. Functions as an E3 ubiquitin ligase. This chain is Putative U-box domain-containing protein 53 (PUB53), found in Arabidopsis thaliana (Mouse-ear cress).